A 362-amino-acid chain; its full sequence is Probable RNA methyltransferase Tbd_1951 (362 aa).

Glu89 serves as the catalytic Proton acceptor. One can recognise a Radical SAM core domain in the interval 92 to 318 (LLPRDGVCVS…AKLRHSAGQD (227 aa)). Cys99 and Cys323 form a disulfide bridge. [4Fe-4S] cluster contacts are provided by Cys106, Cys110, and Cys113. S-adenosyl-L-methionine-binding positions include 151–152 (GE), Ser181, 204–206 (SLH), and Asn280. Cys323 (S-methylcysteine intermediate) is an active-site residue. Residues 342–362 (LPSAETPAASPKAAASIGFPG) form a disordered region. Low complexity predominate over residues 343–362 (PSAETPAASPKAAASIGFPG).

The protein belongs to the radical SAM superfamily. RlmN family. Requires [4Fe-4S] cluster as cofactor.

It is found in the cytoplasm. In Thiobacillus denitrificans (strain ATCC 25259 / T1), this protein is Probable RNA methyltransferase Tbd_1951.